The sequence spans 176 residues: uncharacterized protein (176 aa).

Polar residues predominate over residues 1 to 12; the sequence is MRLPYSSSKPIP. 2 disordered regions span residues 1-88 and 109-132; these read MRLP…PQQQ and VNNSPIKTPSKKHRSSSKKSPSSS. A compositionally biased stretch (low complexity) spans 13–24; it reads TNNNNNNNNTNN. Residues 37–46 are compositionally biased toward polar residues; sequence SYYQTQENNK. Residues 47–88 are compositionally biased toward low complexity; the sequence is PQQSQQHPLLQHQQQQQQQQQQQQQQQQQQQQQQQQQQPQQQ.

This is an uncharacterized protein from Dictyostelium discoideum (Social amoeba).